Consider the following 472-residue polypeptide: Argininosuccinate lyase (472 aa).

It belongs to the lyase 1 family. Argininosuccinate lyase subfamily.

The protein localises to the cytoplasm. The catalysed reaction is 2-(N(omega)-L-arginino)succinate = fumarate + L-arginine. It participates in amino-acid biosynthesis; L-arginine biosynthesis; L-arginine from L-ornithine and carbamoyl phosphate: step 3/3. The polypeptide is Argininosuccinate lyase (Mycobacterium avium (strain 104)).